Here is a 518-residue protein sequence, read N- to C-terminus: Ethanolamine kinase (518 aa).

A compositionally biased stretch (polar residues) spans 1–19 (MGTETKSNSYTGQISTSGG). A disordered region spans residues 1–88 (MGTETKSNSY…DIRAKPEDKS (88 aa)). The span at 33 to 68 (QTVNQQTLSLSQSNQVQNQLNSHSNSNSYPNPSGSE) shows a compositional bias: low complexity. Residues 69–88 (NKNENEQNSRDIRAKPEDKS) are compositionally biased toward basic and acidic residues. Phosphoserine is present on residues Ser190 and Ser194.

The protein belongs to the choline/ethanolamine kinase family.

The protein resides in the cytoplasm. It catalyses the reaction ethanolamine + ATP = phosphoethanolamine + ADP + H(+). The protein operates within phospholipid metabolism; phosphatidylethanolamine biosynthesis; phosphatidylethanolamine from ethanolamine: step 1/3. Functionally, highly specific for ethanolamine phosphorylation. May be a rate-controlling step in phosphatidylethanolamine biosynthesis. The protein is Ethanolamine kinase (eas) of Drosophila melanogaster (Fruit fly).